A 546-amino-acid polypeptide reads, in one-letter code: Chaperonin GroEL (546 aa).

ATP contacts are provided by residues 30–33, lysine 51, 87–91, glycine 415, and aspartate 495; these read TLGP and DGTTT.

This sequence belongs to the chaperonin (HSP60) family. As to quaternary structure, forms a cylinder of 14 subunits composed of two heptameric rings stacked back-to-back. Interacts with the co-chaperonin GroES.

Its subcellular location is the cytoplasm. It catalyses the reaction ATP + H2O + a folded polypeptide = ADP + phosphate + an unfolded polypeptide.. In terms of biological role, together with its co-chaperonin GroES, plays an essential role in assisting protein folding. The GroEL-GroES system forms a nano-cage that allows encapsulation of the non-native substrate proteins and provides a physical environment optimized to promote and accelerate protein folding. The sequence is that of Chaperonin GroEL from Brucella suis (strain ATCC 23445 / NCTC 10510).